Consider the following 107-residue polypeptide: U1-lycotoxin-Ls1b (107 aa).

An N-terminal signal peptide occupies residues 1 to 20 (MMKVLVVVALLVTLISYSSS). Residues 21 to 41 (EGIDDLEADELLSLMANEQTR) constitute a propeptide that is removed on maturation. Disulfide bonds link cysteine 44–cysteine 59, cysteine 51–cysteine 68, cysteine 58–cysteine 86, and cysteine 70–cysteine 84.

This sequence belongs to the neurotoxin 19 (CSTX) family. 04 (U1-Lctx) subfamily. In terms of tissue distribution, expressed by the venom gland.

The protein localises to the secreted. This is U1-lycotoxin-Ls1b from Lycosa singoriensis (Wolf spider).